We begin with the raw amino-acid sequence, 209 residues long: Small ribosomal subunit protein uS4 (209 aa).

The tract at residues 22 to 45 is disordered; that stretch reads RGRNPLLRKPNPPGQHGMQRKKKS. Residues 93-154 enclose the S4 RNA-binding domain; the sequence is CRLDSIVYRL…KSKRLAIVTE (62 aa).

Belongs to the universal ribosomal protein uS4 family. As to quaternary structure, part of the 30S ribosomal subunit. Contacts protein S5. The interaction surface between S4 and S5 is involved in control of translational fidelity.

Its function is as follows. One of the primary rRNA binding proteins, it binds directly to 16S rRNA where it nucleates assembly of the body of the 30S subunit. With S5 and S12 plays an important role in translational accuracy. This is Small ribosomal subunit protein uS4 from Chlamydia trachomatis serovar L2 (strain ATCC VR-902B / DSM 19102 / 434/Bu).